The primary structure comprises 389 residues: Geranylgeranyl pyrophosphate synthase A (389 aa).

3 residues coordinate isopentenyl diphosphate: Lys99, Arg102, and His131. Mg(2+) is bound by residues Asp138 and Asp142. Residue Arg147 participates in dimethylallyl diphosphate binding. Arg148 contacts isopentenyl diphosphate.

It belongs to the FPP/GGPP synthase family. The cofactor is Mg(2+).

It localises to the cytoplasm. It catalyses the reaction isopentenyl diphosphate + (2E)-geranyl diphosphate = (2E,6E)-farnesyl diphosphate + diphosphate. The catalysed reaction is isopentenyl diphosphate + (2E,6E)-farnesyl diphosphate = (2E,6E,10E)-geranylgeranyl diphosphate + diphosphate. The protein operates within isoprenoid biosynthesis; farnesyl diphosphate biosynthesis; farnesyl diphosphate from geranyl diphosphate and isopentenyl diphosphate: step 1/1. It participates in isoprenoid biosynthesis; geranylgeranyl diphosphate biosynthesis; geranylgeranyl diphosphate from farnesyl diphosphate and isopentenyl diphosphate: step 1/1. Catalyzes the trans-addition of the 2 molecules of isopentenyl diphosphate (IPP) onto geranyl diphosphate (GDP) to form geranylgeranyl pyrophosphate (GGDP). Does not catalyze the conversion of dimethylallyl diphosphate (DMAPP). The polypeptide is Geranylgeranyl pyrophosphate synthase A (GGS-A) (Phomopsis amygdali (Fusicoccum amygdali)).